We begin with the raw amino-acid sequence, 207 residues long: ATP synthase subunit b (207 aa).

Positions 1–27 (MKLRATFVFKTTLVALSFALFALFLVS) are cleaved as a signal peptide. Residue Cys28 is the site of N-palmitoyl cysteine attachment. Cys28 carries the S-diacylglycerol cysteine lipid modification. A helical membrane pass occupies residues 49–69 (WVFLAHLLAFVILLFLLLFLF).

This sequence belongs to the ATPase B chain family. As to quaternary structure, F-type ATPases have 2 components, F(1) - the catalytic core - and F(0) - the membrane proton channel. F(1) has five subunits: alpha(3), beta(3), gamma(1), delta(1), epsilon(1). F(0) has three main subunits: a(1), b(2) and c(10-14). The alpha and beta chains form an alternating ring which encloses part of the gamma chain. F(1) is attached to F(0) by a central stalk formed by the gamma and epsilon chains, while a peripheral stalk is formed by the delta and b chains.

The protein localises to the cell membrane. Functionally, f(1)F(0) ATP synthase produces ATP from ADP in the presence of a proton or sodium gradient. F-type ATPases consist of two structural domains, F(1) containing the extramembraneous catalytic core and F(0) containing the membrane proton channel, linked together by a central stalk and a peripheral stalk. During catalysis, ATP synthesis in the catalytic domain of F(1) is coupled via a rotary mechanism of the central stalk subunits to proton translocation. Its function is as follows. Component of the F(0) channel, it forms part of the peripheral stalk, linking F(1) to F(0). In Mycoplasma pneumoniae (strain ATCC 29342 / M129 / Subtype 1) (Mycoplasmoides pneumoniae), this protein is ATP synthase subunit b.